Consider the following 284-residue polypeptide: Polyamine aminopropyltransferase (284 aa).

In terms of domain architecture, PABS spans 6 to 242 (KGWFTEVCKE…GWWSATLAGH (237 aa)). Residue glutamine 36 participates in S-methyl-5'-thioadenosine binding. Residues histidine 67 and aspartate 91 each contribute to the spermidine site. Residues glutamate 111 and 142 to 143 (DG) each bind S-methyl-5'-thioadenosine. Aspartate 161 serves as the catalytic Proton acceptor. 161-164 (DSTD) is a spermidine binding site.

It belongs to the spermidine/spermine synthase family. As to quaternary structure, homodimer or homotetramer.

Its subcellular location is the cytoplasm. It catalyses the reaction S-adenosyl 3-(methylsulfanyl)propylamine + putrescine = S-methyl-5'-thioadenosine + spermidine + H(+). It participates in amine and polyamine biosynthesis; spermidine biosynthesis; spermidine from putrescine: step 1/1. Its function is as follows. Catalyzes the irreversible transfer of a propylamine group from the amino donor S-adenosylmethioninamine (decarboxy-AdoMet) to putrescine (1,4-diaminobutane) to yield spermidine. This Nitrosococcus oceani (strain ATCC 19707 / BCRC 17464 / JCM 30415 / NCIMB 11848 / C-107) protein is Polyamine aminopropyltransferase.